Consider the following 443-residue polypeptide: Exodeoxyribonuclease 7 large subunit (443 aa).

This sequence belongs to the XseA family. As to quaternary structure, heterooligomer composed of large and small subunits.

It localises to the cytoplasm. It catalyses the reaction Exonucleolytic cleavage in either 5'- to 3'- or 3'- to 5'-direction to yield nucleoside 5'-phosphates.. Functionally, bidirectionally degrades single-stranded DNA into large acid-insoluble oligonucleotides, which are then degraded further into small acid-soluble oligonucleotides. The polypeptide is Exodeoxyribonuclease 7 large subunit (Vibrio campbellii (strain ATCC BAA-1116)).